The following is a 98-amino-acid chain: NADH-ubiquinone oxidoreductase chain 4L (98 aa).

Transmembrane regions (helical) follow at residues 1–21 (MPIIYMNIMLAFTISLLGMLI), 29–49 (SLLCLEGMMLSLFIMNTLMAL), and 58–78 (IVPITLLVFAACEAAVGLALL).

It belongs to the complex I subunit 4L family. In terms of assembly, core subunit of respiratory chain NADH dehydrogenase (Complex I) which is composed of 45 different subunits.

It is found in the mitochondrion inner membrane. It catalyses the reaction a ubiquinone + NADH + 5 H(+)(in) = a ubiquinol + NAD(+) + 4 H(+)(out). Functionally, core subunit of the mitochondrial membrane respiratory chain NADH dehydrogenase (Complex I) which catalyzes electron transfer from NADH through the respiratory chain, using ubiquinone as an electron acceptor. Part of the enzyme membrane arm which is embedded in the lipid bilayer and involved in proton translocation. In Colobus guereza (Mantled guereza), this protein is NADH-ubiquinone oxidoreductase chain 4L (MT-ND4L).